A 221-amino-acid chain; its full sequence is uncharacterized protein (221 aa).

This is an uncharacterized protein from Methanocaldococcus jannaschii (strain ATCC 43067 / DSM 2661 / JAL-1 / JCM 10045 / NBRC 100440) (Methanococcus jannaschii).